Here is a 151-residue protein sequence, read N- to C-terminus: CD-NTase-associated protein 19 (151 aa).

Helical transmembrane passes span 25–45 (TVFNFYIAITGLLAAGIGVTL), 52–72 (VLFTSLMGVFVAFISFIFWKL), and 127–147 (ISFVIVGFTGILLAITPFLMK).

It belongs to the Cap19 family.

It localises to the cell inner membrane. Its function is as follows. Membrane protein component of a CBASS (cyclic oligonucleotide-based antiphage signaling system) which provides immunity against bacteriophage. The CD-NTase protein synthesizes cyclic nucleotides in response to infection; these serve as specific second messenger signals. The signals activate a diverse range of effectors, leading to bacterial cell death and thus abortive phage infection. A type III CBASS system. Expression of this CBASS system (Cap17-CapW-CdnC-Cap7-Cap6-Cap18-Cap19) in a susceptible E.coli (strain JP313) confers resistance to bacteriophage lambda cI-. This chain is CD-NTase-associated protein 19, found in Escherichia coli.